We begin with the raw amino-acid sequence, 363 residues long: MNKLALYCRAGFEKETAGEITDKAAQLGVFGFVNLKENSGYIIFECYQAGDADRLARELKFEQLIFARQMIVVGDMLQDLPAEDRISPIVAQYQALNPRHSSDIFVETPDTNEAKELLTFCRKFTVPLRSSLKKQGWLTKSERAKGSMGLHILFVRPGCCYVGYAYNDNKSPFFMGIPRLKFPAEAPSRSTLKLEEAILTFIPEAEEKKRFTDEMTGVDLGACPGGWTYQLVKRGVFVYAVDHGKMAASLHETGRIEHCPEDGFKFQPLKRKTIDWLVCDMVEQPMRISKLIGKWLINGWCRETIFNLKLPMKKRYQEVQLCLAYLEEELEKQGFWFKIQAKHLYHDREEITVHIAVMGRKPQ.

Residues Ser-190, 223–226 (CPGG), Asp-242, Asp-262, and Asp-280 contribute to the S-adenosyl-L-methionine site. The Proton acceptor role is filled by Lys-309.

The protein belongs to the class I-like SAM-binding methyltransferase superfamily. RNA methyltransferase RlmE family. RlmM subfamily. As to quaternary structure, monomer.

The protein resides in the cytoplasm. It catalyses the reaction cytidine(2498) in 23S rRNA + S-adenosyl-L-methionine = 2'-O-methylcytidine(2498) in 23S rRNA + S-adenosyl-L-homocysteine + H(+). Catalyzes the 2'-O-methylation at nucleotide C2498 in 23S rRNA. This chain is Ribosomal RNA large subunit methyltransferase M, found in Actinobacillus pleuropneumoniae serotype 5b (strain L20).